The chain runs to 478 residues: GDP-fucose protein O-fucosyltransferase 3 (478 aa).

At 1–8 (MVWIQRRR) the chain is on the cytoplasmic side. The helical; Signal-anchor for type II membrane protein transmembrane segment at 9 to 31 (LLASCLCITATVFLLVTLQVVVE) threads the bilayer. Over 32 to 478 (LGKFERKKFK…QEFWALVFKD (447 aa)) the chain is Lumenal. 2 N-linked (GlcNAc...) asparagine glycosylation sites follow: Asn-110 and Asn-168. Cysteines 389 and 392 form a disulfide.

It belongs to the glycosyltransferase 10 family.

The protein localises to the endoplasmic reticulum membrane. It catalyses the reaction L-threonyl-[protein] + GDP-beta-L-fucose = 3-O-(alpha-L-fucosyl)-L-threonyl-[protein] + GDP + H(+). It carries out the reaction L-seryl-[protein] + GDP-beta-L-fucose = 3-O-(alpha-L-fucosyl)-L-seryl-[protein] + GDP + H(+). It functions in the pathway protein modification; protein glycosylation. Protein O-fucosyltransferase that specifically catalyzes O-fucosylation of serine or threonine residues in EMI domains of target proteins, such as MMRN1, MMRN2 and EMID1. Attaches fucose through an O-glycosidic linkage. O-fucosylation of EMI domain-containing proteins may be required for facilitating protein folding and secretion. May also show alpha-(1,3)-fucosyltransferase activity toward the innermost N-acetyl glucosamine (GlcNAc) residue in biantennary N-glycan acceptors. However, this was tested with a library of synthetic substrates and this activity is unsure in vivo. May be involved in biosynthesis of Lewis X-carrying biantennary N-glycans that regulate neuron stem cell self-renewal during brain development. This Canis lupus familiaris (Dog) protein is GDP-fucose protein O-fucosyltransferase 3 (FUT10).